The following is a 294-amino-acid chain: Halotolerance protein HAL1 (294 aa).

A disordered region spans residues 115-153; that stretch reads LKRGTKEQEDINSSTSKKSAVINNFSGEKTPNPRPQSSN. Polar residues predominate over residues 125–153; it reads INSSTSKKSAVINNFSGEKTPNPRPQSSN. Ser-266 bears the Phosphoserine mark.

Its subcellular location is the cytoplasm. Its function is as follows. Involved in salt tolerance. The sequence is that of Halotolerance protein HAL1 (HAL1) from Saccharomyces cerevisiae (strain ATCC 204508 / S288c) (Baker's yeast).